The sequence spans 297 residues: Phosphatidylserine decarboxylase proenzyme (297 aa).

Residues D112, H168, and S255 each act as charge relay system; for autoendoproteolytic cleavage activity in the active site. S255 functions as the Schiff-base intermediate with substrate; via pyruvic acid; for decarboxylase activity in the catalytic mechanism. Residue S255 is modified to Pyruvic acid (Ser); by autocatalysis.

The protein belongs to the phosphatidylserine decarboxylase family. PSD-B subfamily. Prokaryotic type II sub-subfamily. Heterodimer of a large membrane-associated beta subunit and a small pyruvoyl-containing alpha subunit. The cofactor is pyruvate. Post-translationally, is synthesized initially as an inactive proenzyme. Formation of the active enzyme involves a self-maturation process in which the active site pyruvoyl group is generated from an internal serine residue via an autocatalytic post-translational modification. Two non-identical subunits are generated from the proenzyme in this reaction, and the pyruvate is formed at the N-terminus of the alpha chain, which is derived from the carboxyl end of the proenzyme. The autoendoproteolytic cleavage occurs by a canonical serine protease mechanism, in which the side chain hydroxyl group of the serine supplies its oxygen atom to form the C-terminus of the beta chain, while the remainder of the serine residue undergoes an oxidative deamination to produce ammonia and the pyruvoyl prosthetic group on the alpha chain. During this reaction, the Ser that is part of the protease active site of the proenzyme becomes the pyruvoyl prosthetic group, which constitutes an essential element of the active site of the mature decarboxylase.

Its subcellular location is the cell membrane. The enzyme catalyses a 1,2-diacyl-sn-glycero-3-phospho-L-serine + H(+) = a 1,2-diacyl-sn-glycero-3-phosphoethanolamine + CO2. The protein operates within phospholipid metabolism; phosphatidylethanolamine biosynthesis; phosphatidylethanolamine from CDP-diacylglycerol: step 2/2. Its function is as follows. Catalyzes the formation of phosphatidylethanolamine (PtdEtn) from phosphatidylserine (PtdSer). This chain is Phosphatidylserine decarboxylase proenzyme, found in Clostridium tetani (strain Massachusetts / E88).